A 428-amino-acid polypeptide reads, in one-letter code: Enolase (428 aa).

(2R)-2-phosphoglycerate is bound at residue Q163. The Proton donor role is filled by E205. Residues D242, E285, and D312 each contribute to the Mg(2+) site. Residues K337, R366, S367, and K388 each coordinate (2R)-2-phosphoglycerate. Catalysis depends on K337, which acts as the Proton acceptor.

The protein belongs to the enolase family. Mg(2+) is required as a cofactor.

The protein resides in the cytoplasm. The protein localises to the secreted. It localises to the cell surface. It catalyses the reaction (2R)-2-phosphoglycerate = phosphoenolpyruvate + H2O. It functions in the pathway carbohydrate degradation; glycolysis; pyruvate from D-glyceraldehyde 3-phosphate: step 4/5. In terms of biological role, catalyzes the reversible conversion of 2-phosphoglycerate (2-PG) into phosphoenolpyruvate (PEP). It is essential for the degradation of carbohydrates via glycolysis. This is Enolase from Novosphingobium aromaticivorans (strain ATCC 700278 / DSM 12444 / CCUG 56034 / CIP 105152 / NBRC 16084 / F199).